Consider the following 442-residue polypeptide: Ribosomal protein uS12 methylthiotransferase RimO (442 aa).

The region spanning 8-118 is the MTTase N-terminal domain; that stretch reads PKVGFVSLGC…VLGHVHKYVA (111 aa). Residues Cys17, Cys53, Cys82, Cys150, Cys154, and Cys157 each contribute to the [4Fe-4S] cluster site. The Radical SAM core domain occupies 136 to 373; the sequence is LTPRHYAYLK…MELQQQVSIR (238 aa). The TRAM domain maps to 376 to 442; the sequence is ARKVGKEMTV…EYDLWASLIG (67 aa).

The protein belongs to the methylthiotransferase family. RimO subfamily. [4Fe-4S] cluster is required as a cofactor.

It localises to the cytoplasm. It carries out the reaction L-aspartate(89)-[ribosomal protein uS12]-hydrogen + (sulfur carrier)-SH + AH2 + 2 S-adenosyl-L-methionine = 3-methylsulfanyl-L-aspartate(89)-[ribosomal protein uS12]-hydrogen + (sulfur carrier)-H + 5'-deoxyadenosine + L-methionine + A + S-adenosyl-L-homocysteine + 2 H(+). Its function is as follows. Catalyzes the methylthiolation of an aspartic acid residue of ribosomal protein uS12. The chain is Ribosomal protein uS12 methylthiotransferase RimO from Aeromonas salmonicida (strain A449).